Here is a 77-residue protein sequence, read N- to C-terminus: MPKRLLQGVVISSKADKTVTVKVERKFKHPIYKKFVKVSKKYAAHDSENKYQEGDKVSIIESRPISKTKTWVVVNGE.

This sequence belongs to the universal ribosomal protein uS17 family. In terms of assembly, part of the 30S ribosomal subunit.

One of the primary rRNA binding proteins, it binds specifically to the 5'-end of 16S ribosomal RNA. The sequence is that of Small ribosomal subunit protein uS17 from Rickettsia rickettsii (strain Sheila Smith).